The primary structure comprises 248 residues: PF03932 family protein CutC (248 aa).

It belongs to the CutC family. As to quaternary structure, homodimer.

It is found in the cytoplasm. The sequence is that of PF03932 family protein CutC from Shigella boydii serotype 4 (strain Sb227).